A 305-amino-acid polypeptide reads, in one-letter code: Ornithine carbamoyltransferase, catabolic (305 aa).

Carbamoyl phosphate-binding positions include 50–53 (STRT), Gln-77, Arg-101, and 128–131 (HPLQ). L-ornithine contacts are provided by residues Asn-159, Asp-223, and 227–228 (SM). Carbamoyl phosphate-binding positions include 263 to 264 (CL) and Arg-291.

It belongs to the aspartate/ornithine carbamoyltransferase superfamily. OTCase family.

Its subcellular location is the cytoplasm. The catalysed reaction is carbamoyl phosphate + L-ornithine = L-citrulline + phosphate + H(+). Its pathway is amino-acid degradation; L-arginine degradation via ADI pathway; carbamoyl phosphate from L-arginine: step 2/2. Its function is as follows. Reversibly catalyzes the transfer of the carbamoyl group from carbamoyl phosphate (CP) to the N(epsilon) atom of ornithine (ORN) to produce L-citrulline. The protein is Ornithine carbamoyltransferase, catabolic of Thermoplasma volcanium (strain ATCC 51530 / DSM 4299 / JCM 9571 / NBRC 15438 / GSS1).